The following is a 704-amino-acid chain: Protein cueball (704 aa).

An N-terminal signal peptide occupies residues 1 to 26 (MKSPCRAAAGWLVLLLSSCCLGYVIA). Residues 27 to 594 (TEWAAAVTTD…TYCKESFNRT (568 aa)) are Extracellular-facing. 4 LDL-receptor class B repeats span residues 69-119 (GKLY…DHLE), 120-166 (RRLY…EATT), 199-242 (RHLY…DHYR), and 243-288 (NRLY…KNDY). Asn152 and Asn219 each carry an N-linked (GlcNAc...) asparagine glycan. 3 consecutive EGF-like domains span residues 363 to 397 (TQQQ…KLCE), 432 to 478 (DRNR…ARCE), and 514 to 551 (EEYS…QRCE). Cystine bridges form between Cys372–Cys385, Cys387–Cys396, Cys436–Cys446, Cys440–Cys465, Cys467–Cys477, Cys518–Cys528, Cys522–Cys539, and Cys541–Cys550. Asn375 is a glycosylation site (N-linked (GlcNAc...) asparagine). N-linked (GlcNAc...) asparagine glycosylation is present at Asn450. N-linked (GlcNAc...) asparagine glycosylation is present at Asn532. Asn592 is a glycosylation site (N-linked (GlcNAc...) asparagine). Residues 595–615 (VVYTSLCFTVSFALLLAVVLV) form a helical membrane-spanning segment. Topologically, residues 616–704 (VSRMMKPPRP…NCGDGTAERK (89 aa)) are cytoplasmic.

The protein belongs to the cueball family.

The protein resides in the cell membrane. Functionally, has a role in spermatogenesis and oogenesis. The polypeptide is Protein cueball (Anopheles gambiae (African malaria mosquito)).